Reading from the N-terminus, the 218-residue chain is 3,4-dihydroxy-2-butanone 4-phosphate synthase (218 aa).

D-ribulose 5-phosphate contacts are provided by residues 37 to 38 (RE), aspartate 42, 150 to 154 (RGGHT), and glutamate 174. Residue glutamate 38 coordinates Mg(2+). A Mg(2+)-binding site is contributed by histidine 153.

The protein belongs to the DHBP synthase family. As to quaternary structure, homodimer. It depends on Mg(2+) as a cofactor. Requires Mn(2+) as cofactor.

The catalysed reaction is D-ribulose 5-phosphate = (2S)-2-hydroxy-3-oxobutyl phosphate + formate + H(+). It functions in the pathway cofactor biosynthesis; riboflavin biosynthesis; 2-hydroxy-3-oxobutyl phosphate from D-ribulose 5-phosphate: step 1/1. In terms of biological role, catalyzes the conversion of D-ribulose 5-phosphate to formate and 3,4-dihydroxy-2-butanone 4-phosphate. The sequence is that of 3,4-dihydroxy-2-butanone 4-phosphate synthase from Erwinia tasmaniensis (strain DSM 17950 / CFBP 7177 / CIP 109463 / NCPPB 4357 / Et1/99).